Consider the following 244-residue polypeptide: uncharacterized protein (244 aa).

Positions 7–74 (VKEKDQVVAH…YHRGAFIERF (68 aa)) constitute an HTH gntR-type domain. The segment at residues 34–53 (RNEIAHGLGVSRVPIQEALV) is a DNA-binding region (H-T-H motif).

This is an uncharacterized protein from Mycobacterium tuberculosis (strain CDC 1551 / Oshkosh).